The chain runs to 561 residues: Dihydroxy-acid dehydratase (561 aa).

D78 lines the Mg(2+) pocket. C119 lines the [2Fe-2S] cluster pocket. D120 and K121 together coordinate Mg(2+). An N6-carboxylysine modification is found at K121. C192 is a binding site for [2Fe-2S] cluster. A Mg(2+)-binding site is contributed by E448. Residue S474 is the Proton acceptor of the active site.

This sequence belongs to the IlvD/Edd family. Homodimer. The cofactor is [2Fe-2S] cluster. It depends on Mg(2+) as a cofactor.

It carries out the reaction (2R)-2,3-dihydroxy-3-methylbutanoate = 3-methyl-2-oxobutanoate + H2O. The catalysed reaction is (2R,3R)-2,3-dihydroxy-3-methylpentanoate = (S)-3-methyl-2-oxopentanoate + H2O. It participates in amino-acid biosynthesis; L-isoleucine biosynthesis; L-isoleucine from 2-oxobutanoate: step 3/4. The protein operates within amino-acid biosynthesis; L-valine biosynthesis; L-valine from pyruvate: step 3/4. Its function is as follows. Functions in the biosynthesis of branched-chain amino acids. Catalyzes the dehydration of (2R,3R)-2,3-dihydroxy-3-methylpentanoate (2,3-dihydroxy-3-methylvalerate) into 2-oxo-3-methylpentanoate (2-oxo-3-methylvalerate) and of (2R)-2,3-dihydroxy-3-methylbutanoate (2,3-dihydroxyisovalerate) into 2-oxo-3-methylbutanoate (2-oxoisovalerate), the penultimate precursor to L-isoleucine and L-valine, respectively. This is Dihydroxy-acid dehydratase from Sulfurimonas denitrificans (strain ATCC 33889 / DSM 1251) (Thiomicrospira denitrificans (strain ATCC 33889 / DSM 1251)).